The sequence spans 399 residues: Acetate kinase (399 aa).

N7 lines the Mg(2+) pocket. K14 provides a ligand contact to ATP. Residue R91 coordinates substrate. D148 serves as the catalytic Proton donor/acceptor. ATP contacts are provided by residues 208 to 212, 283 to 285, and 331 to 335; these read HLGNG, DFR, and GLGEN. Position 384 (E384) interacts with Mg(2+).

The protein belongs to the acetokinase family. In terms of assembly, homodimer. Mg(2+) serves as cofactor. It depends on Mn(2+) as a cofactor.

The protein resides in the cytoplasm. It catalyses the reaction acetate + ATP = acetyl phosphate + ADP. It functions in the pathway metabolic intermediate biosynthesis; acetyl-CoA biosynthesis; acetyl-CoA from acetate: step 1/2. Functionally, catalyzes the formation of acetyl phosphate from acetate and ATP. Can also catalyze the reverse reaction. The polypeptide is Acetate kinase (Desulfitobacterium hafniense (strain Y51)).